Consider the following 331-residue polypeptide: Gem-associated protein 2 (331 aa).

Disordered regions lie at residues 1 to 23 (MDEFQSKAFEVGEEIEPDDNEPL), 101 to 130 (SNRPSNNNNNNNNNNNNNNNNNNNNNLIPQ), and 151 to 222 (NNNN…TKKP). Positions 11–21 (VGEEIEPDDNE) are enriched in acidic residues. A compositionally biased stretch (low complexity) spans 106–126 (NNNNNNNNNNNNNNNNNNNNN). A compositionally biased stretch (acidic residues) spans 165 to 215 (DNQEDDDDDENNEDYEYNENKEEEEEEEEEEEEEEEVEEEEEEEEEEEEVV). Residues 173–224 (DENNEDYEYNENKEEEEEEEEEEEEEEEVEEEEEEEEEEEEVVDYSTKKPTL) adopt a coiled-coil conformation.

The protein belongs to the gemin-2 family.

It localises to the nucleus. The protein resides in the gem. Its subcellular location is the cytoplasm. Functionally, the SMN complex catalyzes the assembly of small nuclear ribonucleoproteins (snRNPs), the building blocks of the spliceosome, and thereby plays an important role in the splicing of cellular pre-mRNAs. Most spliceosomal snRNPs contain a common set of Sm proteins SNRPB, SNRPD1, SNRPD2, SNRPD3, SNRPE, SNRPF and SNRPG that assemble in a heptameric protein ring on the Sm site of the small nuclear RNA to form the core snRNP (Sm core). In the cytosol, the Sm proteins SNRPD1, SNRPD2, SNRPE, SNRPF and SNRPG (5Sm) are trapped in an inactive 6S pICln-Sm complex by the chaperone CLNS1A that controls the assembly of the core snRNP. To assemble core snRNPs, the SMN complex accepts the trapped 5Sm proteins from CLNS1A. Binding of snRNA inside 5Sm ultimately triggers eviction of the SMN complex, thereby allowing binding of SNRPD3 and SNRPB to complete assembly of the core snRNP. Within the SMN complex, GEMIN2 constrains the conformation of 5Sm, thereby promoting 5Sm binding to snRNA containing the snRNP code (a nonameric Sm site and a 3'-adjacent stem-loop), thus preventing progression of assembly until a cognate substrate is bound. May play an essential role in spliceosomal snRNP assembly in the cytoplasm and may be required for pre-mRNA splicing in the nucleus. The protein is Gem-associated protein 2 (gemin2) of Dictyostelium discoideum (Social amoeba).